Here is a 447-residue protein sequence, read N- to C-terminus: Trigger factor (447 aa).

One can recognise a PPIase FKBP-type domain in the interval 188–273; the sequence is GDKLVIDFEG…VNDIQVAEDF (86 aa).

It belongs to the FKBP-type PPIase family. Tig subfamily.

The protein resides in the cytoplasm. The enzyme catalyses [protein]-peptidylproline (omega=180) = [protein]-peptidylproline (omega=0). Involved in protein export. Acts as a chaperone by maintaining the newly synthesized protein in an open conformation. Functions as a peptidyl-prolyl cis-trans isomerase. This Wolbachia sp. subsp. Brugia malayi (strain TRS) protein is Trigger factor.